The sequence spans 193 residues: Adenine phosphoribosyltransferase (193 aa).

The protein belongs to the purine/pyrimidine phosphoribosyltransferase family. In terms of assembly, homodimer.

It is found in the cytoplasm. It carries out the reaction AMP + diphosphate = 5-phospho-alpha-D-ribose 1-diphosphate + adenine. Its pathway is purine metabolism; AMP biosynthesis via salvage pathway; AMP from adenine: step 1/1. Its function is as follows. Catalyzes a salvage reaction resulting in the formation of AMP, that is energically less costly than de novo synthesis. In Bifidobacterium longum (strain DJO10A), this protein is Adenine phosphoribosyltransferase.